The sequence spans 196 residues: Dephospho-CoA kinase (196 aa).

Positions 6–196 constitute a DPCK domain; it reads AIALTGGIGT…QVERFLKTLL (191 aa). Residue 14–19 coordinates ATP; that stretch reads GTGKST.

Belongs to the CoaE family.

It localises to the cytoplasm. The catalysed reaction is 3'-dephospho-CoA + ATP = ADP + CoA + H(+). It functions in the pathway cofactor biosynthesis; coenzyme A biosynthesis; CoA from (R)-pantothenate: step 5/5. Catalyzes the phosphorylation of the 3'-hydroxyl group of dephosphocoenzyme A to form coenzyme A. This chain is Dephospho-CoA kinase, found in Helicobacter pylori (strain ATCC 700392 / 26695) (Campylobacter pylori).